The following is a 583-amino-acid chain: Proline--tRNA ligase (583 aa).

It belongs to the class-II aminoacyl-tRNA synthetase family. ProS type 1 subfamily. Homodimer.

It is found in the cytoplasm. The catalysed reaction is tRNA(Pro) + L-proline + ATP = L-prolyl-tRNA(Pro) + AMP + diphosphate. Its function is as follows. Catalyzes the attachment of proline to tRNA(Pro) in a two-step reaction: proline is first activated by ATP to form Pro-AMP and then transferred to the acceptor end of tRNA(Pro). As ProRS can inadvertently accommodate and process non-cognate amino acids such as alanine and cysteine, to avoid such errors it has two additional distinct editing activities against alanine. One activity is designated as 'pretransfer' editing and involves the tRNA(Pro)-independent hydrolysis of activated Ala-AMP. The other activity is designated 'posttransfer' editing and involves deacylation of mischarged Ala-tRNA(Pro). The misacylated Cys-tRNA(Pro) is not edited by ProRS. In Methylococcus capsulatus (strain ATCC 33009 / NCIMB 11132 / Bath), this protein is Proline--tRNA ligase.